Reading from the N-terminus, the 434-residue chain is Monodehydroascorbate reductase 1, peroxisomal (434 aa).

FAD-binding positions include 13–16 (GGVS), glutamate 40, arginine 47, lysine 52, isoleucine 95, and 146–147 (RE). Residues 171-177 (GGYIGLE), glutamate 195, arginine 201, and glycine 260 contribute to the NAD(+) site. NADP(+) is bound at residue 173-177 (YIGLE). 2 residues coordinate NADP(+): arginine 201 and glycine 260. Aspartate 297 serves as a coordination point for FAD. 313 to 314 (EH) serves as a coordination point for NAD(+). Residue 313-314 (EH) participates in NADP(+) binding. Valine 315 is an FAD binding site. Arginine 319 is a binding site for L-ascorbate. Position 348 (tyrosine 348) interacts with FAD. NAD(+) is bound at residue tyrosine 348. Residue tyrosine 348 coordinates NADP(+). Arginine 350 contributes to the L-ascorbate binding site. Position 416 is a phosphoserine (serine 416).

Belongs to the FAD-dependent oxidoreductase family. It depends on FAD as a cofactor.

It is found in the peroxisome matrix. The enzyme catalyses 2 monodehydro-L-ascorbate radical + NADH + H(+) = 2 L-ascorbate + NAD(+). Its function is as follows. Catalyzes the conversion of monodehydroascorbate to ascorbate, oxidizing NADH in the process. This Arabidopsis thaliana (Mouse-ear cress) protein is Monodehydroascorbate reductase 1, peroxisomal.